Here is a 291-residue protein sequence, read N- to C-terminus: Pyridoxal kinase PdxY (291 aa).

Residues Ser9 and Thr44 to Gln45 each bind substrate. Residues Asp112, Val144, Glu149, Lys182, and Arg207–Leu210 each bind ATP. Asp221 lines the substrate pocket.

The protein belongs to the pyridoxine kinase family. PdxY subfamily. Homodimer. Mg(2+) serves as cofactor.

It catalyses the reaction pyridoxal + ATP = pyridoxal 5'-phosphate + ADP + H(+). The protein operates within cofactor metabolism; pyridoxal 5'-phosphate salvage; pyridoxal 5'-phosphate from pyridoxal: step 1/1. Pyridoxal kinase involved in the salvage pathway of pyridoxal 5'-phosphate (PLP). Catalyzes the phosphorylation of pyridoxal to PLP. The sequence is that of Pyridoxal kinase PdxY from Photobacterium profundum (strain SS9).